The primary structure comprises 744 residues: 5-methyltetrahydropteroyltriglutamate--homocysteine methyltransferase (744 aa).

5-methyltetrahydropteroyltri-L-glutamate-binding positions include 17–20 (REVK) and lysine 110. L-homocysteine contacts are provided by residues 422-424 (IGS) and glutamate 475. L-methionine contacts are provided by residues 422–424 (IGS) and glutamate 475. Tryptophan 552 provides a ligand contact to 5-methyltetrahydropteroyltri-L-glutamate. Aspartate 590 contributes to the L-homocysteine binding site. Aspartate 590 contacts L-methionine. Glutamate 596 is a 5-methyltetrahydropteroyltri-L-glutamate binding site. Histidine 632, cysteine 634, and glutamate 656 together coordinate Zn(2+). Histidine 685 functions as the Proton donor in the catalytic mechanism. Residue cysteine 717 participates in Zn(2+) binding.

Belongs to the vitamin-B12 independent methionine synthase family. Zn(2+) serves as cofactor.

The enzyme catalyses 5-methyltetrahydropteroyltri-L-glutamate + L-homocysteine = tetrahydropteroyltri-L-glutamate + L-methionine. The protein operates within amino-acid biosynthesis; L-methionine biosynthesis via de novo pathway; L-methionine from L-homocysteine (MetE route): step 1/1. In terms of biological role, catalyzes the transfer of a methyl group from 5-methyltetrahydrofolate to homocysteine resulting in methionine formation. In Trichodesmium erythraeum (strain IMS101), this protein is 5-methyltetrahydropteroyltriglutamate--homocysteine methyltransferase.